The chain runs to 404 residues: Zinc finger CCCH domain-containing protein 15 homolog (404 aa).

The segment covering 1–10 (MPPKKAPPGP) has biased composition (pro residues). Positions 1–71 (MPPKKAPPGP…KRKEEKEKKL (71 aa)) are disordered. Over residues 12 to 28 (KKTEQKKKEKVIEDKTF) the composition is skewed to basic and acidic residues. The span at 38–50 (QQKFIQQVQKQVQ) shows a compositional bias: low complexity. The segment covering 56–71 (PRQDGDKRKEEKEKKL) has biased composition (basic and acidic residues). 2 C3H1-type zinc fingers span residues 94-121 (DPKS…HDLS) and 165-202 (PTTD…HALP). Position 218 is a phosphothreonine (Thr218). Phosphoserine is present on Ser221. Positions 246–270 (LAWKKRKIAEKKAKLAAEEERKKSD) form a coiled coil. Low complexity-rich tracts occupy residues 352-361 (EAAKTAAAED) and 369-380 (PSSSAPANDAAP). The segment at 352 to 380 (EAAKTAAAEDAAADEDGPSSSAPANDAAP) is disordered.

Belongs to the ZC3H15/TMA46 family.

This Drosophila melanogaster (Fruit fly) protein is Zinc finger CCCH domain-containing protein 15 homolog.